Consider the following 264-residue polypeptide: 4-hydroxy-tetrahydrodipicolinate reductase (264 aa).

Position 9-14 (glycine 9–methionine 14) interacts with NAD(+). Arginine 36 lines the NADP(+) pocket. NAD(+) contacts are provided by residues glycine 100 to threonine 102 and serine 121 to methionine 124. Histidine 154 serves as the catalytic Proton donor/acceptor. Histidine 155 serves as a coordination point for (S)-2,3,4,5-tetrahydrodipicolinate. Lysine 158 serves as the catalytic Proton donor. Glycine 164 to threonine 165 is a (S)-2,3,4,5-tetrahydrodipicolinate binding site.

It belongs to the DapB family.

The protein localises to the cytoplasm. The enzyme catalyses (S)-2,3,4,5-tetrahydrodipicolinate + NAD(+) + H2O = (2S,4S)-4-hydroxy-2,3,4,5-tetrahydrodipicolinate + NADH + H(+). It catalyses the reaction (S)-2,3,4,5-tetrahydrodipicolinate + NADP(+) + H2O = (2S,4S)-4-hydroxy-2,3,4,5-tetrahydrodipicolinate + NADPH + H(+). Its pathway is amino-acid biosynthesis; L-lysine biosynthesis via DAP pathway; (S)-tetrahydrodipicolinate from L-aspartate: step 4/4. Its function is as follows. Catalyzes the conversion of 4-hydroxy-tetrahydrodipicolinate (HTPA) to tetrahydrodipicolinate. The sequence is that of 4-hydroxy-tetrahydrodipicolinate reductase from Wolbachia sp. subsp. Brugia malayi (strain TRS).